Here is a 155-residue protein sequence, read N- to C-terminus: uncharacterized protein (155 aa).

The next 2 membrane-spanning stretches (helical) occupy residues 33–53 (ITLL…LFLL) and 83–103 (IGAV…GIWV).

The protein to E.coli YdgK.

The protein localises to the cell membrane. This is an uncharacterized protein from Synechocystis sp. (strain ATCC 27184 / PCC 6803 / Kazusa).